Reading from the N-terminus, the 338-residue chain is Ornithine carbamoyltransferase, catabolic (338 aa).

Residues Ser-58–Thr-61, Gln-85, Arg-109, and His-136–Gln-139 each bind carbamoyl phosphate. Residues Asn-168, Asp-232, and Ser-236 to Met-237 each bind L-ornithine. Residues Cys-273–Leu-274 and Arg-318 contribute to the carbamoyl phosphate site.

This sequence belongs to the aspartate/ornithine carbamoyltransferase superfamily. OTCase family.

The protein localises to the cytoplasm. The catalysed reaction is carbamoyl phosphate + L-ornithine = L-citrulline + phosphate + H(+). It participates in amino-acid degradation; L-arginine degradation via ADI pathway; carbamoyl phosphate from L-arginine: step 2/2. Its function is as follows. Reversibly catalyzes the transfer of the carbamoyl group from carbamoyl phosphate (CP) to the N(epsilon) atom of ornithine (ORN) to produce L-citrulline. This chain is Ornithine carbamoyltransferase, catabolic, found in Streptococcus gordonii (strain Challis / ATCC 35105 / BCRC 15272 / CH1 / DL1 / V288).